The primary structure comprises 73 residues: Mu-conotoxin SIIIA (73 aa).

The signal sequence occupies residues 1–20 (MMSKLGVLLTVCPLLFPLTA). The tract at residues 20 to 40 (ALPPDGDQPADRPAERMQDDI) is disordered. Residues 21-49 (LPPDGDQPADRPAERMQDDISSDEHPLFD) constitute a propeptide that is removed on maturation. Over residues 28–40 (PADRPAERMQDDI) the composition is skewed to basic and acidic residues. Gln-52 bears the Pyrrolidone carboxylic acid mark. 3 disulfide bridges follow: Cys-54-Cys-64, Cys-55-Cys-70, and Cys-59-Cys-71. Cys-71 is subject to Cysteine amide.

Belongs to the conotoxin M superfamily. As to expression, expressed by the venom duct.

Its subcellular location is the secreted. Its function is as follows. Mu-conotoxins block voltage-gated sodium channels (Nav). This toxin moderately blocks rNav1.1/SCN1A, rNav1.2/SCN2A, rNav1.3/SCN3A, rNav1.4/SCN4A, and mNav1.6/SCN8A. The sequence is that of Mu-conotoxin SIIIA from Conus striatus (Striated cone).